The following is a 416-amino-acid chain: Leu/Ile/Val-binding protein homolog 4 (416 aa).

Residues 1–26 (MSLKVFLQAGVACAALSLAGAAGASA) form the signal peptide.

It belongs to the leucine-binding protein family.

Functionally, component of an amino-acid transport system. This is Leu/Ile/Val-binding protein homolog 4 from Brucella melitensis biotype 1 (strain ATCC 23456 / CCUG 17765 / NCTC 10094 / 16M).